A 628-amino-acid chain; its full sequence is 1-deoxy-D-xylulose-5-phosphate synthase (628 aa).

Thiamine diphosphate is bound by residues histidine 72 and 113 to 115; that span reads GHS. Aspartate 144 is a Mg(2+) binding site. Thiamine diphosphate is bound by residues 145 to 146, asparagine 173, tyrosine 284, and glutamate 366; that span reads GA. Asparagine 173 contributes to the Mg(2+) binding site.

Belongs to the transketolase family. DXPS subfamily. As to quaternary structure, homodimer. The cofactor is Mg(2+). Requires thiamine diphosphate as cofactor.

It carries out the reaction D-glyceraldehyde 3-phosphate + pyruvate + H(+) = 1-deoxy-D-xylulose 5-phosphate + CO2. The protein operates within metabolic intermediate biosynthesis; 1-deoxy-D-xylulose 5-phosphate biosynthesis; 1-deoxy-D-xylulose 5-phosphate from D-glyceraldehyde 3-phosphate and pyruvate: step 1/1. In terms of biological role, catalyzes the acyloin condensation reaction between C atoms 2 and 3 of pyruvate and glyceraldehyde 3-phosphate to yield 1-deoxy-D-xylulose-5-phosphate (DXP). This Shouchella clausii (strain KSM-K16) (Alkalihalobacillus clausii) protein is 1-deoxy-D-xylulose-5-phosphate synthase.